Reading from the N-terminus, the 365-residue chain is Aminomethyltransferase (365 aa).

Belongs to the GcvT family. As to quaternary structure, the glycine cleavage system is composed of four proteins: P, T, L and H.

The catalysed reaction is N(6)-[(R)-S(8)-aminomethyldihydrolipoyl]-L-lysyl-[protein] + (6S)-5,6,7,8-tetrahydrofolate = N(6)-[(R)-dihydrolipoyl]-L-lysyl-[protein] + (6R)-5,10-methylene-5,6,7,8-tetrahydrofolate + NH4(+). Its function is as follows. The glycine cleavage system catalyzes the degradation of glycine. This Desulfitobacterium hafniense (strain DSM 10664 / DCB-2) protein is Aminomethyltransferase.